Reading from the N-terminus, the 330-residue chain is Probable cytosolic iron-sulfur protein assembly protein 1 (330 aa).

WD repeat units follow at residues L12–I49, A56–F95, G105–E144, E151–V190, G195–Q236, V248–F286, and C292–A330.

It belongs to the WD repeat CIA1 family. As to quaternary structure, interacts with NAR1.

It is found in the cytoplasm. The protein localises to the nucleus. Functionally, essential component of the cytosolic iron-sulfur (Fe/S) protein assembly machinery. Required for the maturation of extramitochondrial Fe/S proteins. The sequence is that of Probable cytosolic iron-sulfur protein assembly protein 1 from Saccharomyces cerevisiae (strain YJM789) (Baker's yeast).